The chain runs to 98 residues: U1-theraphotoxin-Ap1a (98 aa).

Residues 1-23 (MRSLTLAAVLACSLLLVFHTSAA) form the signal peptide. Positions 24-50 (EELEVQDGHLMNPGDGDTALATVDDER) are excised as a propeptide. Cystine bridges form between C54-C84, C58-C90, and C72-C95. The disordered stretch occupies residues 63-84 (DGKSKEGKPCKPKGDKNKDKKC).

This sequence belongs to the neurotoxin 12 (Hwtx-2) family. 01 (Ap1a) subfamily. In terms of tissue distribution, expressed by the venom gland.

It is found in the secreted. Functionally, is toxic to both insects and mammals. Induces reversible paralysis when injected into S.frugiperda larvae. Reduces both the amplitude and frequency of responses from muscle (GF-TTM and GF-DLM) pathways in the D.melanogaster giant fiber circuit, suggesting an action at the neuromuscular junction, which is mediated by glutamatergic receptors. In mice, intracranial injection of 30 ug causes increased urination, myoclonus, hypermotility with circular movements followed by respiratory and generalized seizures resulting in death within 25-35 minutes of injection. The polypeptide is U1-theraphotoxin-Ap1a (Acanthoscurria paulensis (Brazilian giant black tarantula spider)).